The primary structure comprises 211 residues: Prolactin-3C1 (211 aa).

The N-terminal stretch at 1 to 29 (MQLSLTQARTWKGLLLLVSCMILWISVTP) is a signal peptide. N-linked (GlcNAc...) asparagine glycans are attached at residues Asn77 and Asn173. Cys80 and Cys187 are joined by a disulfide.

Belongs to the somatotropin/prolactin family. As to expression, expressed exclusively in decidual tissue.

Its subcellular location is the secreted. The chain is Prolactin-3C1 (Prl3c1) from Rattus norvegicus (Rat).